The following is a 179-amino-acid chain: Vi polysaccharide biosynthesis protein TviA (179 aa).

It participates in glycan metabolism; Vi-antigen biosynthesis. Its pathway is capsule biogenesis; capsule polysaccharide biosynthesis. This chain is Vi polysaccharide biosynthesis protein TviA (tviA), found in Salmonella typhi.